A 66-amino-acid chain; its full sequence is Potassium channel toxin alpha-KTx (66 aa).

The N-terminal stretch at 1–21 is a signal peptide; that stretch reads MNTKVVLIMLMITSVILVVEA. Intrachain disulfides connect Cys29–Cys49, Cys35–Cys59, Cys39–Cys61, and Cys44–Cys64.

The protein belongs to the short scorpion toxin superfamily. Potassium channel inhibitor family. Expressed by the venom gland.

The protein resides in the secreted. In terms of biological role, blocks voltage-gated potassium channels. This is Potassium channel toxin alpha-KTx from Hoffmannihadrurus gertschi (Scorpion).